A 41-amino-acid chain; its full sequence is Competence-stimulating peptide type 2 (41 aa).

Residues 1 to 24 constitute a propeptide that is removed on maturation; it reads MKNTVKLEQFVALKEKDLQKIKGG.

This sequence belongs to the ComC family.

It localises to the secreted. Acts as a pheromone, induces cells to develop competence for genetic transformation. This chain is Competence-stimulating peptide type 2 (comC2), found in Streptococcus pneumoniae serotype 4 (strain ATCC BAA-334 / TIGR4).